We begin with the raw amino-acid sequence, 341 residues long: L-threonine 3-dehydrogenase (341 aa).

Residue Cys-38 participates in Zn(2+) binding. Active-site charge relay system residues include Thr-40 and His-43. Residues His-63, Glu-64, Cys-93, Cys-96, Cys-99, and Cys-107 each coordinate Zn(2+). Residues Ile-175, Asp-195, Arg-200, 262 to 264, and 286 to 287 contribute to the NAD(+) site; these read LGI and IY.

The protein belongs to the zinc-containing alcohol dehydrogenase family. Homotetramer. Zn(2+) is required as a cofactor.

It localises to the cytoplasm. It carries out the reaction L-threonine + NAD(+) = (2S)-2-amino-3-oxobutanoate + NADH + H(+). It functions in the pathway amino-acid degradation; L-threonine degradation via oxydo-reductase pathway; glycine from L-threonine: step 1/2. Functionally, catalyzes the NAD(+)-dependent oxidation of L-threonine to 2-amino-3-ketobutyrate. This Idiomarina loihiensis (strain ATCC BAA-735 / DSM 15497 / L2-TR) protein is L-threonine 3-dehydrogenase.